Here is a 388-residue protein sequence, read N- to C-terminus: MLKAVHFGAGNIGRGFIGYLLYKSGYEITFVDISKELVESINNYKRYNVIILKDNVEKEEVKNIKAIHIEDEENLSKAIVDADIITTSVGANNLKSIGEKLRNYLKIRKANIDKPLNIMACENALFATNILKNSILEKGDKDFIEYVNQKIGFPNTAVDRIVPNVDIKKELPIDVAVEDFYEWDIEKKAIIGDLNIKGAELVDDLEPYIERKLFLLNGAHATTAYLGYLKGYKYIHEAIQDDFIRNIVSKMQEEASIALSKKHNIKIDNLREYSNKVIKRFKNSYLKDEVVRVGREPTRKLSGNDRLMMPAKLCYEIGITPKFILYGIAAGFLFDYKEDPQACKIQDDIKNFGLEKTISKITGLEENSDLLHEIVKKYKELKETFRKR.

4 to 15 (AVHFGAGNIGRG) is an NAD(+) binding site.

This sequence belongs to the mannitol dehydrogenase family.

The enzyme catalyses D-mannitol 1-phosphate + NAD(+) = beta-D-fructose 6-phosphate + NADH + H(+). The chain is Mannitol-1-phosphate 5-dehydrogenase from Thermoanaerobacter pseudethanolicus (strain ATCC 33223 / 39E) (Clostridium thermohydrosulfuricum).